Here is a 69-residue protein sequence, read N- to C-terminus: Conopeptide Y-Pl1 (69 aa).

Positions 1-20 are cleaved as a signal peptide; it reads MSKLGVVLFVFLLLLPLAAP. Positions 21 to 69 are excised as a propeptide; that stretch reads QPVGDQPADQPADRNAEARARFLHPFQYYTLYRYLTRFLHRYPIYYIRY.

Belongs to the conotoxin M superfamily. Conopeptide Y family. In terms of tissue distribution, expressed by the venom duct.

It localises to the secreted. Tyrosine-rich conopeptide that targets several channels/receptors that are expressed in Xenopus oocytes. These targets are the voltage-gated potassium channels Kv1.6/KCNA6 (IC(50) is 170 nM) and Kv1.2/KCNA2 (IC(50) is 2.0 uM), Nav1.2/SCN2A (30% of inhibition), and N-methyl-D-aspartate (NMDA) receptor (GRIN1/GRIN2A/GRIN3B and GRIN1/GRIN2B/GRIN3B) (15% of inhibition). In vivo, causes the marine worm N.virens to move very slowly in contrast to control worms, and causes seizures (at 5 nmol) and death (20 nmol) to mice when intracranially injected. This chain is Conopeptide Y-Pl1, found in Conus planorbis (Planorbis cone).